We begin with the raw amino-acid sequence, 175 residues long: MLDLGLSKMALIGVVALVVLGPERLPRVARTAGALFGRAQRYINDVKAEVSREIELDALRTMKTDFEQAARNVENTIHDNLREHERDLNAAWNSAVSPGGSAAADAPDGPSAASGELSWRTIATAPAKRRNWRVKKAVTPVWYKRATMRRTQVQSGAARVARHRPASLRRPARFL.

A helical membrane pass occupies residues 1–21; the sequence is MLDLGLSKMALIGVVALVVLG. Disordered regions lie at residues 96-115 and 153-175; these read VSPGGSAAADAPDGPSAASG and VQSGAARVARHRPASLRRPARFL. Positions 160–175 are enriched in basic residues; sequence VARHRPASLRRPARFL.

This sequence belongs to the TatB family. As to quaternary structure, the Tat system comprises two distinct complexes: a TatABC complex, containing multiple copies of TatA, TatB and TatC subunits, and a separate TatA complex, containing only TatA subunits. Substrates initially bind to the TatABC complex, which probably triggers association of the separate TatA complex to form the active translocon.

It is found in the cell inner membrane. Its function is as follows. Part of the twin-arginine translocation (Tat) system that transports large folded proteins containing a characteristic twin-arginine motif in their signal peptide across membranes. Together with TatC, TatB is part of a receptor directly interacting with Tat signal peptides. TatB may form an oligomeric binding site that transiently accommodates folded Tat precursor proteins before their translocation. This is Sec-independent protein translocase protein TatB from Burkholderia mallei (strain ATCC 23344).